The chain runs to 151 residues: Large ribosomal subunit protein bL9 (151 aa).

Belongs to the bacterial ribosomal protein bL9 family.

In terms of biological role, binds to the 23S rRNA. The polypeptide is Large ribosomal subunit protein bL9 (Lactobacillus johnsonii (strain CNCM I-12250 / La1 / NCC 533)).